The primary structure comprises 600 residues: Proline--tRNA ligase (600 aa).

This sequence belongs to the class-II aminoacyl-tRNA synthetase family. ProS type 1 subfamily. As to quaternary structure, homodimer.

Its subcellular location is the cytoplasm. The enzyme catalyses tRNA(Pro) + L-proline + ATP = L-prolyl-tRNA(Pro) + AMP + diphosphate. Catalyzes the attachment of proline to tRNA(Pro) in a two-step reaction: proline is first activated by ATP to form Pro-AMP and then transferred to the acceptor end of tRNA(Pro). As ProRS can inadvertently accommodate and process non-cognate amino acids such as alanine and cysteine, to avoid such errors it has two additional distinct editing activities against alanine. One activity is designated as 'pretransfer' editing and involves the tRNA(Pro)-independent hydrolysis of activated Ala-AMP. The other activity is designated 'posttransfer' editing and involves deacylation of mischarged Ala-tRNA(Pro). The misacylated Cys-tRNA(Pro) is not edited by ProRS. In Synechococcus sp. (strain ATCC 27144 / PCC 6301 / SAUG 1402/1) (Anacystis nidulans), this protein is Proline--tRNA ligase.